Here is a 245-residue protein sequence, read N- to C-terminus: 1-(5-phosphoribosyl)-5-[(5-phosphoribosylamino)methylideneamino] imidazole-4-carboxamide isomerase (245 aa).

Asp-15 (proton acceptor) is an active-site residue. Catalysis depends on Asp-135, which acts as the Proton donor.

It belongs to the HisA/HisF family.

It is found in the cytoplasm. It catalyses the reaction 1-(5-phospho-beta-D-ribosyl)-5-[(5-phospho-beta-D-ribosylamino)methylideneamino]imidazole-4-carboxamide = 5-[(5-phospho-1-deoxy-D-ribulos-1-ylimino)methylamino]-1-(5-phospho-beta-D-ribosyl)imidazole-4-carboxamide. The protein operates within amino-acid biosynthesis; L-histidine biosynthesis; L-histidine from 5-phospho-alpha-D-ribose 1-diphosphate: step 4/9. This Haloquadratum walsbyi (strain DSM 16790 / HBSQ001) protein is 1-(5-phosphoribosyl)-5-[(5-phosphoribosylamino)methylideneamino] imidazole-4-carboxamide isomerase.